The chain runs to 322 residues: N-acetyl-gamma-glutamyl-phosphate reductase 2 (322 aa).

Cys117 is an active-site residue.

The protein belongs to the NAGSA dehydrogenase family. Type 2 subfamily.

Its subcellular location is the cytoplasm. It catalyses the reaction N-acetyl-L-glutamate 5-semialdehyde + phosphate + NADP(+) = N-acetyl-L-glutamyl 5-phosphate + NADPH + H(+). The protein operates within amino-acid biosynthesis; L-arginine biosynthesis; N(2)-acetyl-L-ornithine from L-glutamate: step 3/4. In terms of biological role, catalyzes the NADPH-dependent reduction of N-acetyl-5-glutamyl phosphate to yield N-acetyl-L-glutamate 5-semialdehyde. In Nostoc sp. (strain PCC 7120 / SAG 25.82 / UTEX 2576), this protein is N-acetyl-gamma-glutamyl-phosphate reductase 2.